The primary structure comprises 87 residues: Small ribosomal subunit protein bS20 (87 aa).

The disordered stretch occupies residues 1–25 (MANIKSAKKRAVQSEKRRKHNASRR).

It belongs to the bacterial ribosomal protein bS20 family.

Functionally, binds directly to 16S ribosomal RNA. The protein is Small ribosomal subunit protein bS20 of Yersinia pseudotuberculosis serotype O:1b (strain IP 31758).